Here is a 122-residue protein sequence, read N- to C-terminus: Spermidine export protein MdtJ (122 aa).

The next 4 membrane-spanning stretches (helical) occupy residues 1–21 (MIYW…TLSM), 31–51 (TGHI…SMAV), 54–74 (VALG…ITLF), and 81–101 (EPIS…IMLV).

Belongs to the drug/metabolite transporter (DMT) superfamily. Small multidrug resistance (SMR) (TC 2.A.7.1) family. MdtJ subfamily. In terms of assembly, forms a complex with MdtI.

It is found in the cell inner membrane. In terms of biological role, catalyzes the excretion of spermidine. This chain is Spermidine export protein MdtJ, found in Serratia proteamaculans (strain 568).